The sequence spans 293 residues: N-acetylmannosamine kinase (293 aa).

Residues 5 to 12 and 133 to 140 each bind ATP; these read AIDIGGTK and GVGGGLVI. His-157, Cys-167, Cys-169, and Cys-174 together coordinate Zn(2+).

Belongs to the ROK (NagC/XylR) family. NanK subfamily. As to quaternary structure, homodimer.

The enzyme catalyses an N-acyl-D-mannosamine + ATP = an N-acyl-D-mannosamine 6-phosphate + ADP + H(+). Its pathway is amino-sugar metabolism; N-acetylneuraminate degradation; D-fructose 6-phosphate from N-acetylneuraminate: step 2/5. Catalyzes the phosphorylation of N-acetylmannosamine (ManNAc) to ManNAc-6-P. In Vibrio vulnificus (strain YJ016), this protein is N-acetylmannosamine kinase.